The following is a 35-amino-acid chain: RQDMVDESVCYITDNNCNGGKCLRSKACHADPWEL.

2 disulfide bridges follow: Cys10-Cys22 and Cys17-Cys28. The interval 31-33 (DPW) is keys region for toxin activity.

It belongs to the neurotoxin 16 (SFI) family. Expressed by the venom gland.

It is found in the secreted. Insecticidal toxin. In Segestria florentina (Tube-web spider), this protein is U1-segestritoxin-Sf1a.